An 883-amino-acid chain; its full sequence is Alanine--tRNA ligase (883 aa).

Zn(2+) is bound by residues H560, H564, C665, and H669.

Belongs to the class-II aminoacyl-tRNA synthetase family. It depends on Zn(2+) as a cofactor.

The protein resides in the cytoplasm. The catalysed reaction is tRNA(Ala) + L-alanine + ATP = L-alanyl-tRNA(Ala) + AMP + diphosphate. In terms of biological role, catalyzes the attachment of alanine to tRNA(Ala) in a two-step reaction: alanine is first activated by ATP to form Ala-AMP and then transferred to the acceptor end of tRNA(Ala). Also edits incorrectly charged Ser-tRNA(Ala) and Gly-tRNA(Ala) via its editing domain. The chain is Alanine--tRNA ligase from Mesomycoplasma hyopneumoniae (strain J / ATCC 25934 / NCTC 10110) (Mycoplasma hyopneumoniae).